The primary structure comprises 272 residues: Cell division protein DivIB (272 aa).

At 1 to 21 (MRLSSHGKKTVSTSNNPVFNR) the chain is on the cytoplasmic side. The chain crosses the membrane as a helical span at residues 22 to 42 (IGLFFTAAILFALFLQMLFFL). In terms of domain architecture, POTRA spans 43–115 (RPWQDIKETK…GTAIIRVNEN (73 aa)). The Extracellular portion of the chain corresponds to 43–272 (RPWQDIKETK…SSSKSSNSSK (230 aa)). The tract at residues 253 to 272 (LSSLSSDKSKSSSKSSNSSK) is disordered.

This sequence belongs to the FtsQ/DivIB family. DivIB subfamily.

The protein localises to the cell membrane. Cell division protein that may be involved in stabilizing or promoting the assembly of the division complex. In Oenococcus oeni (strain ATCC BAA-331 / PSU-1), this protein is Cell division protein DivIB.